The primary structure comprises 649 residues: MGCAEGKAVAAAAPTELQTKGKNGDGRRRSAKDHHPGKTLPENPAGFTSTATADSRALLQAYIDGHSVVIFSRSTCTRCTEVKKLFKSLCVPYFVLELDQTEDGRALEGTLSELAAETDLPVVFVKQRKIGGHGPTLKAYQEGRLQKLLKMNGPEDLPKSYDYDLIIIGGGSGGLAAAKEAAQYGKKVMVLDFVTPTPLGTRWGLGGTCVNVGCIPKKLMHQAALLGQALQDSRNYGWKVEETVKHDWDRMIEAVQNHIGSLNWGYRVALREKKVVYENAYGQFIGPHRIKATNNKGKEKIYSAERFLIATGERPRYLGIPGDKEYCISSDDLFSLPYCPGKTLVVGASYVALECAGFLAGIGLDVTVMVRSILLRGFDQDMANKIGEHMEEHGIKFIRQFVPIKVEQIEAGTPGRLRVVAQSTNSEEIIEGEYNTVMLAIGRDACTRKIGLETVGVKINEKTGKIPVTDEEQTNVPYIYAIGDILEDKVELTPVAIQAGRLLAQRLYAGSTVKCDYENVPTTVFTPLEYGACGLSEEKAVEKFGEENIEVYHSYFWPLEWTIPSRDNNKCYAKIICNTKDNERVVGFHVLGPNAGEVTQGFAAALKCGLTKKQLDSTIGIHPVCAEVFTTLSVTKRSGASILQAGCUG.

An N-acetylmethionine modification is found at methionine 1. The tract at residues 1–49 (MGCAEGKAVAAAAPTELQTKGKNGDGRRRSAKDHHPGKTLPENPAGFTS) is disordered. Residues 22 to 36 (KNGDGRRRSAKDHHP) are compositionally biased toward basic and acidic residues. Positions 56–156 (RALLQAYIDG…KLLKMNGPED (101 aa)) constitute a Glutaredoxin domain. Residues 145–149 (LQKLL) form a required for interaction with ESR1 and ESR2 region. FAD is bound by residues 172–173 (SG), 192–193 (DF), 208–209 (TC), and 213–217 (GCIPK). A disulfide bridge links cysteine 209 with cysteine 214. Residue lysine 218 is modified to N6-succinyllysine. Tyrosine 281 carries the phosphotyrosine modification. Residues 281–282 (YG) and threonine 311 contribute to the FAD site. NADP(+) contacts are provided by residues arginine 316, 348-354 (ASYVALE), 371-372 (RS), arginine 376, 376-378 (RGF), 442-443 (GR), and lysine 465. Tyrosine 350 contacts FAD. Residues aspartate 484, 491–493 (ELT), and histidine 622 contribute to the FAD site. Glutamate 491 is an NADP(+) binding site. The active-site Proton acceptor is the histidine 622. Positions 647 to 648 (CU) form a cross-link, cysteinyl-selenocysteine (Cys-Sec). Position 648 (selenocysteine 648) is a non-standard amino acid, selenocysteine.

It belongs to the class-I pyridine nucleotide-disulfide oxidoreductase family. Homodimer. Interacts with HERC5. In terms of assembly, interacts with ESR1 and ESR2. FAD serves as cofactor. In terms of processing, the N-terminus is blocked. Post-translationally, ISGylated. As to expression, expressed predominantly in Leydig cells (at protein level). Also expressed in ovary, spleen, heart, liver, kidney and pancreas and in a number of cancer cell lines. In terms of tissue distribution, widely expressed with highest levels in kidney, testis, uterus, ovary, prostate, placenta and fetal liver.

Its subcellular location is the cytoplasm. The protein resides in the nucleus. It catalyses the reaction [thioredoxin]-dithiol + NADP(+) = [thioredoxin]-disulfide + NADPH + H(+). The enzyme catalyses H2O2 + NADPH + H(+) = NADP(+) + 2 H2O. In terms of biological role, reduces disulfideprotein thioredoxin (Trx) to its dithiol-containing form. Homodimeric flavoprotein involved in the regulation of cellular redox reactions, growth and differentiation. Contains a selenocysteine residue at the C-terminal active site that is essential for catalysis. Also has reductase activity on hydrogen peroxide (H2O2). Induces actin and tubulin polymerization, leading to formation of cell membrane protrusions. Its function is as follows. Enhances the transcriptional activity of estrogen receptors ESR1 and ESR2. Functionally, enhances the transcriptional activity of the estrogen receptor ESR2 only. Mediates cell death induced by a combination of interferon-beta and retinoic acid. This Homo sapiens (Human) protein is Thioredoxin reductase 1, cytoplasmic.